We begin with the raw amino-acid sequence, 313 residues long: Methionyl-tRNA formyltransferase (313 aa).

Residue 110-113 (SLLP) coordinates (6S)-5,6,7,8-tetrahydrofolate.

This sequence belongs to the Fmt family.

It catalyses the reaction L-methionyl-tRNA(fMet) + (6R)-10-formyltetrahydrofolate = N-formyl-L-methionyl-tRNA(fMet) + (6S)-5,6,7,8-tetrahydrofolate + H(+). Its function is as follows. Attaches a formyl group to the free amino group of methionyl-tRNA(fMet). The formyl group appears to play a dual role in the initiator identity of N-formylmethionyl-tRNA by promoting its recognition by IF2 and preventing the misappropriation of this tRNA by the elongation apparatus. The chain is Methionyl-tRNA formyltransferase from Lysinibacillus sphaericus (strain C3-41).